Consider the following 127-residue polypeptide: MRHQKSGRKFNRTSAHREAMFRNMAASLFKHELIKTTLPKAKELRRVAEPLITIGKVDGVANRRLAFARLRDKEAVGKLFVELGPRYATRPGGYLRILKAGFRAGDNAPMAYVELVGRPVVAEEVAE.

Belongs to the bacterial ribosomal protein bL17 family. Part of the 50S ribosomal subunit. Contacts protein L32.

This Xanthomonas euvesicatoria pv. vesicatoria (strain 85-10) (Xanthomonas campestris pv. vesicatoria) protein is Large ribosomal subunit protein bL17.